The primary structure comprises 453 residues: Bifunctional protein GlmU (453 aa).

A pyrophosphorylase region spans residues 1–225; that stretch reads MNIVILAAGT…EWETLGVNSK (225 aa). Residues 6 to 9, Lys20, Gln71, 76 to 77, 98 to 100, Gly135, Glu150, Asn165, and Asn223 contribute to the UDP-N-acetyl-alpha-D-glucosamine site; these read LAAG, GT, and YGD. Asp100 contacts Mg(2+). Residue Asn223 coordinates Mg(2+). Positions 226–246 are linker; sequence AQLAELERIHQRNIAEALLVD. Residues 247–453 are N-acetyltransferase; sequence GVTLADPARL…GYVRPVKKKS (207 aa). Residues Arg329 and Lys347 each coordinate UDP-N-acetyl-alpha-D-glucosamine. Catalysis depends on His359, which acts as the Proton acceptor. Residues Tyr362 and Asn373 each coordinate UDP-N-acetyl-alpha-D-glucosamine. Acetyl-CoA is bound by residues Ala376, 382-383, Ser401, and Ala419; that span reads NY.

It in the N-terminal section; belongs to the N-acetylglucosamine-1-phosphate uridyltransferase family. This sequence in the C-terminal section; belongs to the transferase hexapeptide repeat family. In terms of assembly, homotrimer. The cofactor is Mg(2+).

Its subcellular location is the cytoplasm. The enzyme catalyses alpha-D-glucosamine 1-phosphate + acetyl-CoA = N-acetyl-alpha-D-glucosamine 1-phosphate + CoA + H(+). It carries out the reaction N-acetyl-alpha-D-glucosamine 1-phosphate + UTP + H(+) = UDP-N-acetyl-alpha-D-glucosamine + diphosphate. It participates in nucleotide-sugar biosynthesis; UDP-N-acetyl-alpha-D-glucosamine biosynthesis; N-acetyl-alpha-D-glucosamine 1-phosphate from alpha-D-glucosamine 6-phosphate (route II): step 2/2. Its pathway is nucleotide-sugar biosynthesis; UDP-N-acetyl-alpha-D-glucosamine biosynthesis; UDP-N-acetyl-alpha-D-glucosamine from N-acetyl-alpha-D-glucosamine 1-phosphate: step 1/1. It functions in the pathway bacterial outer membrane biogenesis; LPS lipid A biosynthesis. Catalyzes the last two sequential reactions in the de novo biosynthetic pathway for UDP-N-acetylglucosamine (UDP-GlcNAc). The C-terminal domain catalyzes the transfer of acetyl group from acetyl coenzyme A to glucosamine-1-phosphate (GlcN-1-P) to produce N-acetylglucosamine-1-phosphate (GlcNAc-1-P), which is converted into UDP-GlcNAc by the transfer of uridine 5-monophosphate (from uridine 5-triphosphate), a reaction catalyzed by the N-terminal domain. This chain is Bifunctional protein GlmU, found in Burkholderia lata (strain ATCC 17760 / DSM 23089 / LMG 22485 / NCIMB 9086 / R18194 / 383).